Consider the following 1065-residue polypeptide: WD repeat-containing protein on Y chromosome (1065 aa).

8 WD repeats span residues 153-197, 326-365, 369-408, 459-498, 511-550, 598-638, 745-784, and 828-867; these read EEVT…IRTA, RVPL…EPSA, GHNG…LLQT, THAA…RKII, IIDI…VVRN, FHTD…RRYS, KTGD…VPEA, and AHLK…LGTL. A compositionally biased stretch (basic and acidic residues) spans 915 to 925; the sequence is PAKRAEVKAPE. Disordered stretches follow at residues 915–936 and 1024–1065; these read PAKR…QTDD and GSAL…QQSE. Over residues 926–936 the composition is skewed to acidic residues; it reads DRDEETAQTDD.

In Drosophila persimilis (Fruit fly), this protein is WD repeat-containing protein on Y chromosome.